The primary structure comprises 281 residues: Acetyl-coenzyme A carboxylase carboxyl transferase subunit beta (281 aa).

Positions 23 to 281 (LWSKCEDCGA…KTLAMMRVEG (259 aa)) constitute a CoA carboxyltransferase N-terminal domain. Positions 27, 30, 46, and 49 each coordinate Zn(2+). The C4-type zinc-finger motif lies at 27–49 (CEDCGAMLHRRQLEENLNTCNEC).

The protein belongs to the AccD/PCCB family. Acetyl-CoA carboxylase is a heterohexamer composed of biotin carboxyl carrier protein (AccB), biotin carboxylase (AccC) and two subunits each of ACCase subunit alpha (AccA) and ACCase subunit beta (AccD). The cofactor is Zn(2+).

It is found in the cytoplasm. The catalysed reaction is N(6)-carboxybiotinyl-L-lysyl-[protein] + acetyl-CoA = N(6)-biotinyl-L-lysyl-[protein] + malonyl-CoA. It participates in lipid metabolism; malonyl-CoA biosynthesis; malonyl-CoA from acetyl-CoA: step 1/1. Component of the acetyl coenzyme A carboxylase (ACC) complex. Biotin carboxylase (BC) catalyzes the carboxylation of biotin on its carrier protein (BCCP) and then the CO(2) group is transferred by the transcarboxylase to acetyl-CoA to form malonyl-CoA. The protein is Acetyl-coenzyme A carboxylase carboxyl transferase subunit beta of Chlorobium luteolum (strain DSM 273 / BCRC 81028 / 2530) (Pelodictyon luteolum).